Here is a 180-residue protein sequence, read N- to C-terminus: Large ribosomal subunit protein uL6 (180 aa).

This sequence belongs to the universal ribosomal protein uL6 family. Part of the 50S ribosomal subunit.

Its function is as follows. This protein binds to the 23S rRNA, and is important in its secondary structure. It is located near the subunit interface in the base of the L7/L12 stalk, and near the tRNA binding site of the peptidyltransferase center. This is Large ribosomal subunit protein uL6 from Thermus thermophilus (strain ATCC BAA-163 / DSM 7039 / HB27).